The chain runs to 299 residues: Acetylglutamate kinase (299 aa).

Residues 72–73 (GG), Arg-94, and Asn-196 contribute to the substrate site.

It belongs to the acetylglutamate kinase family. ArgB subfamily.

It is found in the cytoplasm. It catalyses the reaction N-acetyl-L-glutamate + ATP = N-acetyl-L-glutamyl 5-phosphate + ADP. The protein operates within amino-acid biosynthesis; L-arginine biosynthesis; N(2)-acetyl-L-ornithine from L-glutamate: step 2/4. Catalyzes the ATP-dependent phosphorylation of N-acetyl-L-glutamate. The polypeptide is Acetylglutamate kinase (Paraburkholderia phymatum (strain DSM 17167 / CIP 108236 / LMG 21445 / STM815) (Burkholderia phymatum)).